The chain runs to 124 residues: Protein MT1307 (124 aa).

A signal peptide (tat-type signal) is located at residues 1–35; sequence MTTMITLRRRFAVAVAGVATAAATTVTLAPAPANA.

It to M.tuberculosis Rv1813c. In terms of processing, predicted to be exported by the Tat system. The position of the signal peptide cleavage has not been experimentally proven.

This chain is Protein MT1307, found in Mycobacterium tuberculosis (strain CDC 1551 / Oshkosh).